We begin with the raw amino-acid sequence, 328 residues long: 5'-AMP-activated protein kinase subunit gamma (328 aa).

CBS domains are found at residues 42–103 (VSYR…PDKF), 123–186 (IQPY…CKEI), 199–259 (ISTN…YNDL), and 268–328 (MRRS…FAES). ADP contacts are provided by residues Ile47, Arg150, Arg151, 171–174 (TQYR), 227–228 (SS), and 297–299 (RVH). Arg150 contacts AMP. Arg150 serves as a coordination point for ATP. An AMP-binding site is contributed by 227–228 (SS). 227–228 (SS) provides a ligand contact to ATP. Residues Arg300 and 313-318 (VLTLSD) each bind ATP. Residue 315-318 (TLSD) participates in ADP binding. 315–318 (TLSD) serves as a coordination point for AMP.

Belongs to the 5'-AMP-activated protein kinase gamma subunit family. AMPK is a heterotrimer of an alpha catalytic subunit, a beta and a gamma non-catalytic subunits.

It is found in the nucleus. The protein localises to the cytoplasm. In terms of biological role, adenine nucleotides-binding subunit gamma of AMP-activated protein kinase (AMPK), an energy sensor protein kinase that plays a key role in regulating cellular energy metabolism. In response to reduction of intracellular ATP levels, AMPK activates energy-producing pathways and inhibits energy-consuming processes: inhibits protein, carbohydrate and lipid biosynthesis, as well as cell growth and proliferation. AMPK acts via direct phosphorylation of metabolic enzymes, and by longer-term effects via phosphorylation of transcription regulators. Gamma non-catalytic subunit mediates binding to AMP, ADP and ATP, leading to activate or inhibit AMPK: AMP-binding results in allosteric activation of alpha catalytic subunit (SNF1) both by inducing phosphorylation and preventing dephosphorylation of catalytic subunits. In Kluyveromyces lactis (strain ATCC 8585 / CBS 2359 / DSM 70799 / NBRC 1267 / NRRL Y-1140 / WM37) (Yeast), this protein is 5'-AMP-activated protein kinase subunit gamma (SNF4).